A 233-amino-acid chain; its full sequence is Pyridoxine 5'-phosphate synthase (233 aa).

Residue asparagine 6 participates in 3-amino-2-oxopropyl phosphate binding. 8-9 (DH) lines the 1-deoxy-D-xylulose 5-phosphate pocket. A 3-amino-2-oxopropyl phosphate-binding site is contributed by arginine 17. Histidine 42 functions as the Proton acceptor in the catalytic mechanism. 1-deoxy-D-xylulose 5-phosphate is bound by residues arginine 44 and histidine 49. The Proton acceptor role is filled by glutamate 69. 1-deoxy-D-xylulose 5-phosphate is bound at residue threonine 99. The Proton donor role is filled by histidine 186. 3-amino-2-oxopropyl phosphate is bound by residues glycine 187 and 208 to 209 (GH).

It belongs to the PNP synthase family. As to quaternary structure, homooctamer; tetramer of dimers.

It is found in the cytoplasm. The enzyme catalyses 3-amino-2-oxopropyl phosphate + 1-deoxy-D-xylulose 5-phosphate = pyridoxine 5'-phosphate + phosphate + 2 H2O + H(+). It functions in the pathway cofactor biosynthesis; pyridoxine 5'-phosphate biosynthesis; pyridoxine 5'-phosphate from D-erythrose 4-phosphate: step 5/5. Catalyzes the complicated ring closure reaction between the two acyclic compounds 1-deoxy-D-xylulose-5-phosphate (DXP) and 3-amino-2-oxopropyl phosphate (1-amino-acetone-3-phosphate or AAP) to form pyridoxine 5'-phosphate (PNP) and inorganic phosphate. The sequence is that of Pyridoxine 5'-phosphate synthase from Anaplasma phagocytophilum (strain HZ).